Here is a 134-residue protein sequence, read N- to C-terminus: Small ribosomal subunit protein uS8c (134 aa).

This sequence belongs to the universal ribosomal protein uS8 family. Part of the 30S ribosomal subunit.

Its subcellular location is the plastid. The protein resides in the chloroplast. Its function is as follows. One of the primary rRNA binding proteins, it binds directly to 16S rRNA central domain where it helps coordinate assembly of the platform of the 30S subunit. The polypeptide is Small ribosomal subunit protein uS8c (rps8) (Eucalyptus globulus subsp. globulus (Tasmanian blue gum)).